A 113-amino-acid polypeptide reads, in one-letter code: ATP-dependent Clp protease adapter protein ClpS (113 aa).

A disordered region spans residues 1 to 26 (MLMQPLMMSDNPDDESDLGLLTKTRP).

Belongs to the ClpS family. Binds to the N-terminal domain of the chaperone ClpA.

Its function is as follows. Involved in the modulation of the specificity of the ClpAP-mediated ATP-dependent protein degradation. This Ruegeria sp. (strain TM1040) (Silicibacter sp.) protein is ATP-dependent Clp protease adapter protein ClpS.